A 347-amino-acid chain; its full sequence is Heme A synthase (347 aa).

The next 8 helical transmembrane spans lie at 17 to 37 (LANW…VGGI), 106 to 126 (GIGA…AIPA), 132 to 152 (MIGI…MVYS), 165 to 185 (LATH…TVLD), 202 to 222 (ALAI…AFVA), 260 to 280 (IVVQ…ALAV), 295 to 315 (AVAT…LTGV), and 317 to 337 (IAVA…LLWA). Residue H266 participates in heme binding. H323 is a binding site for heme.

This sequence belongs to the COX15/CtaA family. Type 2 subfamily. Interacts with CtaB. Requires heme b as cofactor.

The protein resides in the cell membrane. It catalyses the reaction Fe(II)-heme o + 2 A + H2O = Fe(II)-heme a + 2 AH2. Its pathway is porphyrin-containing compound metabolism; heme A biosynthesis; heme A from heme O: step 1/1. In terms of biological role, catalyzes the conversion of heme O to heme A by two successive hydroxylations of the methyl group at C8. The first hydroxylation forms heme I, the second hydroxylation results in an unstable dihydroxymethyl group, which spontaneously dehydrates, resulting in the formyl group of heme A. The sequence is that of Heme A synthase from Rhizorhabdus wittichii (strain DSM 6014 / CCUG 31198 / JCM 15750 / NBRC 105917 / EY 4224 / RW1) (Sphingomonas wittichii).